The chain runs to 213 residues: Sclerostin (213 aa).

The first 23 residues, 1-23 (MQLPLALCLVCLLVHTAFRVVEG), serve as a signal peptide directing secretion. The disordered stretch occupies residues 41–71 (GEYPEPPPELENNKTMNRAENGGRPPHHPFE). Asparagine 53 is a glycosylation site (N-linked (GlcNAc...) asparagine). Intrachain disulfides connect cysteine 80–cysteine 134, cysteine 94–cysteine 148, cysteine 105–cysteine 165, and cysteine 109–cysteine 167. Positions 82-172 (ELHFTRYVTD…ASCKCKRLTR (91 aa)) constitute a CTCK domain. Residue asparagine 175 is glycosylated (N-linked (GlcNAc...) asparagine). The interval 178–213 (ELKDFGTEAARPQKGRKPRPRARSAKANQAELENAY) is disordered. Basic residues predominate over residues 190–201 (QKGRKPRPRARS).

This sequence belongs to the sclerostin family. Interacts with LRP4 (via the extracellular domain); the interaction facilitates the inhibition of Wnt signaling. Interacts with LRP5 (via the first two YWTD-EGF repeat domains); the interaction inhibits Wnt-mediated signaling. Interacts with LRP6. As to expression, widely expressed at low levels with highest levels in bone, cartilage, kidney, liver, bone marrow and primary osteoblasts differentiated for 21 days. Detected in the subendothelial layer of the aortic intima (at protein level).

It localises to the secreted. Its subcellular location is the extracellular space. The protein resides in the extracellular matrix. Negative regulator of bone growth that acts through inhibition of Wnt signaling and bone formation. This Homo sapiens (Human) protein is Sclerostin.